Here is a 466-residue protein sequence, read N- to C-terminus: Probable agmatine/putrescine antiporter AguD (466 aa).

A run of 12 helical transmembrane segments spans residues 8–28, 30–50, 85–105, 120–140, 144–164, 192–212, 226–246, 273–293, 325–345, 350–370, 398–418, and 426–446; these read FSLF…EAAA, VAAI…AFLL, ASWF…VLCP, ISLL…LYPV, VWIL…LGGL, LSFI…CTFA, IIIG…GIGV, WFIS…MVSW, WGAA…APLL, LFWS…IPVF, VYMA…AIPL, and TEQL…ELII.

The protein belongs to the amino acid-polyamine-organocation (APC) superfamily. Glutamate:GABA antiporter (GGA) (TC 2.A.3.7) family.

The protein localises to the cell membrane. Its function is as follows. Probably catalyzes agmatine/putrescine exchange. This chain is Probable agmatine/putrescine antiporter AguD, found in Lactococcus lactis subsp. lactis (strain IL1403) (Streptococcus lactis).